Consider the following 185-residue polypeptide: Acireductone dioxygenase (185 aa).

4 residues coordinate Fe(2+): histidine 97, histidine 99, glutamate 103, and histidine 141. Ni(2+) contacts are provided by histidine 97, histidine 99, glutamate 103, and histidine 141.

Belongs to the acireductone dioxygenase (ARD) family. Monomer. Fe(2+) is required as a cofactor. The cofactor is Ni(2+).

It carries out the reaction 1,2-dihydroxy-5-(methylsulfanyl)pent-1-en-3-one + O2 = 3-(methylsulfanyl)propanoate + CO + formate + 2 H(+). The catalysed reaction is 1,2-dihydroxy-5-(methylsulfanyl)pent-1-en-3-one + O2 = 4-methylsulfanyl-2-oxobutanoate + formate + 2 H(+). The protein operates within amino-acid biosynthesis; L-methionine biosynthesis via salvage pathway; L-methionine from S-methyl-5-thio-alpha-D-ribose 1-phosphate: step 5/6. Functionally, catalyzes 2 different reactions between oxygen and the acireductone 1,2-dihydroxy-3-keto-5-methylthiopentene (DHK-MTPene) depending upon the metal bound in the active site. Fe-containing acireductone dioxygenase (Fe-ARD) produces formate and 2-keto-4-methylthiobutyrate (KMTB), the alpha-ketoacid precursor of methionine in the methionine recycle pathway. Ni-containing acireductone dioxygenase (Ni-ARD) produces methylthiopropionate, carbon monoxide and formate, and does not lie on the methionine recycle pathway. In Stenotrophomonas maltophilia (strain K279a), this protein is Acireductone dioxygenase.